Consider the following 149-residue polypeptide: Arginine regulator (149 aa).

It belongs to the ArgR family.

It localises to the cytoplasm. The protein operates within amino-acid degradation; L-arginine degradation via ADI pathway. Its function is as follows. Regulates the transcription of the arc operon, involved in arginine catabolism. The protein is Arginine regulator (argR1) of Bacillus cereus (strain ATCC 10987 / NRS 248).